The sequence spans 91 residues: Large ribosomal subunit protein uL23 (91 aa).

It belongs to the universal ribosomal protein uL23 family. In terms of assembly, part of the 50S ribosomal subunit. Contacts protein L29, and trigger factor when it is bound to the ribosome.

Its function is as follows. One of the early assembly proteins it binds 23S rRNA. One of the proteins that surrounds the polypeptide exit tunnel on the outside of the ribosome. Forms the main docking site for trigger factor binding to the ribosome. In Staphylococcus epidermidis (strain ATCC 35984 / DSM 28319 / BCRC 17069 / CCUG 31568 / BM 3577 / RP62A), this protein is Large ribosomal subunit protein uL23.